Consider the following 136-residue polypeptide: Small ribosomal subunit protein uS19 (136 aa).

It belongs to the universal ribosomal protein uS19 family.

Protein S19 forms a complex with S13 that binds strongly to the 16S ribosomal RNA. The chain is Small ribosomal subunit protein uS19 from Methanosarcina mazei (strain ATCC BAA-159 / DSM 3647 / Goe1 / Go1 / JCM 11833 / OCM 88) (Methanosarcina frisia).